The following is a 395-amino-acid chain: GPI-anchor transamidase (395 aa).

An N-terminal signal peptide occupies residues 1-27 (MAVTDSLSRAASTLAAVLLLSFGSVAA). The Lumenal segment spans residues 28–368 (SHIEDQAEQF…PKLKDWHPPG (341 aa)). Ca(2+) contacts are provided by Asp79, Ile82, Glu118, and Asp120. His164 (proton donor) is an active-site residue. Residue Cys206 is the Nucleophile; acyl-thioester intermediate of the active site. The a protein site is built by Cys206, Ser232, and Ser234. Residues 231-236 (DSLSHQ) form an autoinhibitory loop region. The cysteines at positions 275 and 280 are disulfide-linked. The chain crosses the membrane as a helical span at residues 369–385 (GFILGLWALIIMVFFKT). Residues 386–395 (YGIKHMKFIF) lie on the Cytoplasmic side of the membrane.

The protein belongs to the peptidase C13 family. In terms of assembly, heteropentamer. Part of the GPI-anchor transamidase complex, consisting of PIGK, PIGT, PIGS, PIGU and GAA1. Interacts with GPAA1. Interacts with PIGT; this interaction, via a disulfide link, stabilizes the expression of GAA1 and PIGK and links them to PIGS. The disulfide bond between PIGK/GPI8 and PIGT is important for normal enzyme activity.

Its subcellular location is the endoplasmic reticulum membrane. It functions in the pathway glycolipid biosynthesis; glycosylphosphatidylinositol-anchor biosynthesis. Its activity is regulated as follows. In the absence of proproteins substrates, exists in an inactive state with a disrupted catalytic site by an autoinhibitory loop. The binding of proprotein substrates, particularly the CSP region, to GPI-T triggers concerted conformational changes that alleviate the inhibition by the autoinhibitory loop. Meanwhile, proprotein residues near the omega- site induce the formation of a catalytic cleft for catalysis, following which the products are released and GPI-T reverts to the inactive state. Its function is as follows. Catalytic subunit of the glycosylphosphatidylinositol-anchor (GPI-anchor) transamidase (GPI-T) complex that catalyzes the formation of the linkage between a proprotein and a GPI-anchor and participates in GPI anchored protein biosynthesis. Recognizes diverse proproteins at a C-terminal signal peptide (CSP) region that lacks consensus sequence and replaces it with a GPI-anchor via a transamidation reaction. Transamidation catalysis reaction follows a two-phase mechanism. In the acyl-enzyme phase, the carbonyl group of the proproteins's omega-site undergoes a nucleophilic attack forming an enzyme-substrate thioester bond. Followed by a general acid catalysis that allows CSP releasing, regenerating the carbonyl, and forming the acyl-enzyme intermediate. In the GPI-anchor attachment phase, the amino group of the GPI-anchor's ethanolamine phosphate, the one on third mannose (EtNP3), mediates a nucleophilic attack on the carbonyl of the acyl-enzyme intermediate, replacing the CSP, allowing GPI-anchor attachment to the omega-residue, therefore forming the product and freeing the enzyme. This chain is GPI-anchor transamidase, found in Pongo abelii (Sumatran orangutan).